The following is a 468-amino-acid chain: Gasdermin-C (468 aa).

The segment at 1–230 is triggers pyroptosis; sequence MSYTFDWLSK…CVILTSANTK (230 aa).

It belongs to the gasdermin family. As to quaternary structure, homooligomer; homooligomeric ring-shaped pore complex containing 27-28 subunits when inserted in the membrane. Cleavage by CASP8 relieves autoinhibition by releasing the N-terminal moiety (Gasdermin-C, N-terminal) that initiates pyroptosis. In terms of processing, palmitoylated.

Its subcellular location is the cytoplasm. It localises to the cytosol. It is found in the cell membrane. The full-length protein before cleavage is inactive: intramolecular interactions between N- and C-terminal domains mediate autoinhibition in the absence of activation signal. The intrinsic pyroptosis-inducing activity is carried by the released N-terminal moiety (Gasdermin-C, N-terminal) following cleavage by caspase CASP8. Its function is as follows. This form constitutes the precursor of the pore-forming protein: upon cleavage, the released N-terminal moiety (Gasdermin-C, N-terminal) binds to membranes and forms pores, triggering pyroptosis. Functionally, pore-forming protein that causes membrane permeabilization and pyroptosis. Produced by the cleavage of gasdermin-C by caspase CASP8 in response to death signals. After cleavage, moves to the plasma membrane where it strongly binds to membrane inner leaflet lipids. Homooligomerizes within the membrane and forms pores of 10-15 nanometers (nm) of inner diameter, triggering pyroptosis. This is Gasdermin-C from Mus musculus (Mouse).